Reading from the N-terminus, the 131-residue chain is MGRYYPVHLKSRCYVCAKCKTHLAFKGHLLSHDYRGKNGPACLFKRVENVIEMEPKTEQMSTGRFIVRHIHCCRCHTYIGWKYVSSYEPSQKFKDGHYILEMQDAVLQRDDPEPDDCFIHPPITFLSSSFS.

The 98-residue stretch at 12–109 (RCYVCAKCKT…LEMQDAVLQR (98 aa)) folds into the Yippee domain. The Zn(2+) site is built by Cys-16, Cys-19, Cys-72, and Cys-75.

This sequence belongs to the yippee family.

The protein is Protein yippee-like PJ691.02 of Schizosaccharomyces pombe (strain 972 / ATCC 24843) (Fission yeast).